We begin with the raw amino-acid sequence, 85 residues long: Putative plasmid stability protein y4jJ (85 aa).

Residues E66–P78 show a composition bias toward basic and acidic residues. Residues E66 to E85 form a disordered region.

The protein to P.syringae pv tomato plasmid stability protein StbC.

Functionally, involved in plasmid stability. In Sinorhizobium fredii (strain NBRC 101917 / NGR234), this protein is Putative plasmid stability protein y4jJ.